The chain runs to 239 residues: Large ribosomal subunit protein uL1 (239 aa).

This sequence belongs to the universal ribosomal protein uL1 family. Part of the 50S ribosomal subunit.

In terms of biological role, binds directly to 23S rRNA. The L1 stalk is quite mobile in the ribosome, and is involved in E site tRNA release. Functionally, protein L1 is also a translational repressor protein, it controls the translation of the L11 operon by binding to its mRNA. The protein is Large ribosomal subunit protein uL1 of Mycolicibacterium gilvum (strain PYR-GCK) (Mycobacterium gilvum (strain PYR-GCK)).